Consider the following 302-residue polypeptide: tRNA pseudouridine synthase B (302 aa).

The active-site Nucleophile is Asp43.

Belongs to the pseudouridine synthase TruB family. Type 1 subfamily.

The enzyme catalyses uridine(55) in tRNA = pseudouridine(55) in tRNA. Its function is as follows. Responsible for synthesis of pseudouridine from uracil-55 in the psi GC loop of transfer RNAs. This is tRNA pseudouridine synthase B from Burkholderia pseudomallei (strain 668).